The primary structure comprises 7182 residues: Replicase polyprotein 1ab (7182 aa).

In terms of domain architecture, CoV Nsp1 globular spans 54–174 (YDNHVKIDCR…HKWFQFCRLY (121 aa)). In terms of domain architecture, BetaCoV Nsp1 C-terminal spans 192–222 (FSVEDAYAEVHAEPKGKYSQKAYALLRQYRG). One can recognise a CoV Nsp2 N-terminal domain in the interval 226 to 488 (VLFVDQYGCD…LITHALYLDY (263 aa)). Zn(2+) contacts are provided by cysteine 365, cysteine 370, cysteine 386, and cysteine 389. The tract at residues 365–389 (CFNDNCDFYGWVSGNMMDGFSCPLC) is C4. Positions 493-681 (CGNLEQNHIL…VNKFYTFFKL (189 aa)) constitute a CoV Nsp2 middle domain. The CoV Nsp2 C-terminal domain occupies 697-809 (LKTINGLVCI…LDQAWRFPCA (113 aa)). The region spanning 811–923 (RKVNFNEKPV…MYCTFAIEDV (113 aa)) is the Ubiquitin-like 1 domain. Tandem repeats lie at residues 945 to 954 (NDDEDVVTGD), 955 to 964 (NDDEDVVTGD), 965 to 974 (NDDEDVVTGD), 975 to 984 (NDDEDVVTGD), 985 to 994 (NDDEDVVTGD), 995 to 1004 (NDDEDVVTGD), 1005 to 1014 (NDDEDVVTGD), 1015 to 1024 (NDDEDVVTGD), 1025 to 1034 (NDDEDVVTGD), 1035 to 1044 (NDDEDVVTGD), 1045 to 1054 (NDDEDVVTGD), 1055 to 1064 (NDDEDVVTGD), 1065 to 1074 (NDDEDVVTGD), and 1075 to 1084 (NDDEDVVTGD). Positions 945-1084 (NDDEDVVTGD…NDDEDVVTGD (140 aa)) are 14 X 10 AA tandem repeat of N-[DN]-D-E-D-V-V-T-G-D. Residues 946–1064 (DDEDVVTGDN…NDDEDVVTGD (119 aa)) form a disordered region. The Peptidase C16 1 domain occupies 1123–1373 (VFNDVYNDAL…VCFVKGDIIN (251 aa)). The For PL1-PRO activity role is filled by cysteine 1161. Positions 1238, 1241, 1264, and 1266 each coordinate Zn(2+). A C4-type 1 zinc finger spans residues 1238 to 1266 (CLKCGFSFDLNGLDALFFYGDIVSHVCKC). Active-site for PL1-PRO activity residues include histidine 1312 and aspartate 1323. Positions 1351–1522 (ELPQLYGLCI…IIQKCQITSV (172 aa)) constitute a Macro domain. A DPUP domain is found at 1578–1649 (NDVRDYLLSK…TVNQVCVLLA (72 aa)). Residues 1649 to 1704 (AKKIDVLLTVDGVNFKSISLTVGEVFGKILGNVFCDGIDVTKLKCSDFYADKILYQ) enclose the Ubiquitin-like 2 domain. In terms of domain architecture, Peptidase C16 2 spans 1718–1978 (SSFGFDQQQL…MVAYNPDLSQ (261 aa)). Cysteine 1757 acts as the For PL2-PRO activity in catalysis. Zn(2+) is bound by residues cysteine 1835, cysteine 1837, cysteine 1869, and cysteine 1871. Residues 1835–1871 (CDCGIKQESRVGVDAVMHFGTLAKTDLFNGYKIGCNC) form a C4-type 2 zinc finger. Residues histidine 1914 and aspartate 1928 each act as for PL2-PRO activity in the active site. A Nucleic acid-binding domain is found at 1992–2093 (IKAQFKPFAK…TYFNKPSFKS (102 aa)). The region spanning 2108-2257 (ESQGNVVTSV…NDKTIFYTTE (150 aa)) is the G2M domain. Helical transmembrane passes span 2226 to 2246 (AIEF…LLHF), 2287 to 2307 (FLVV…NVIF), and 2318 to 2338 (FPIF…LVTI). An HD1 region spans residues 2226-2463 (AIEFYGFLKW…FVLLRFYIVV (238 aa)). The 62-residue stretch at 2323–2384 (GRIVMWIKAT…AIDFVQYEVD (62 aa)) folds into the 3Ecto domain. Intrachain disulfides connect cysteine 2339–cysteine 2363 and cysteine 2354–cysteine 2360. A run of 2 helical transmembrane segments spans residues 2401-2421 (LVIG…LIGL) and 2443-2463 (FIVF…YIVV). The Y1 stretch occupies residues 2471 to 2561 (GFIRHIVYGC…ELKRPVNPTD (91 aa)). Residues 2471-2838 (GFIRHIVYGC…LTTPFSLKGG (368 aa)) enclose the CoV Nsp3 Y domain. Zn(2+)-binding residues include histidine 2475, cysteine 2480, cysteine 2485, cysteine 2488, cysteine 2521, histidine 2524, cysteine 2528, and cysteine 2531. The ZF1 stretch occupies residues 2475–2488 (HIVYGCNKAGCLFC). The tract at residues 2521-2531 (CVKHQWNCFNC) is ZF2. The Y2 stretch occupies residues 2562 to 2654 (ASHYVVTDIK…LVDKKLITTA (93 aa)). The segment at 2562-2838 (ASHYVVTDIK…LTTPFSLKGG (277 aa)) is coV-Y. The tract at residues 2655-2737 (CNGISVTQTM…KSMISAVAAG (83 aa)) is Y3. Residues 2738–2838 (LEFTDENYNN…LTTPFSLKGG (101 aa)) form a Y4 region. Transmembrane regions (helical) follow at residues 2844–2864 (LLYI…ALLP), 3119–3139 (ASSI…YYLI), 3151–3171 (VVVI…VFQV), 3178–3198 (VYAC…SVIM), and 3203–3223 (IVMY…AMVI). The HD2 stretch occupies residues 2844-3223 (LLYILFFVSL…FCVTYVAMVI (380 aa)). The region spanning 3237 to 3334 (IGVNVCSDST…TASVSTSFLQ (98 aa)) is the Nsp4C domain. The region spanning 3335–3637 (SGIVKMVSPT…YQQLAGVKLQ (303 aa)) is the Peptidase C30 domain. Active-site for 3CL-PRO activity residues include histidine 3375 and cysteine 3479. 7 helical membrane-spanning segments follow: residues 3651–3671 (ILIS…WTIF), 3676–3696 (THMI…MLLV), 3701–3721 (FYLT…NYLV), 3744–3764 (FTYV…IFIT), 3772–3792 (IFSL…WYFG), 3800–3820 (LLFI…SLAI), and 3843–3863 (LILL…GFFS). The segment at 3651 to 3863 (ILISTFLFSC…ILSCYWGFFS (213 aa)) is HD3. The 89-residue stretch at 3925–4013 (SKLTDVKCAN…DYVQDSTVLQ (89 aa)) folds into the RdRp Nsp7 cofactor domain. Residues 4014–4210 (ALQSEFVNMA…YNEVANAVMQ (197 aa)) enclose the RdRp Nsp8 cofactor domain. The Nsp9 ssRNA-binding domain maps to 4211 to 4320 (NNELMPHKLK…GTLSSTIRLQ (110 aa)). The ExoN/MTase coactivator domain maps to 4321 to 4458 (AGVATEYAAN…CVGSSVAVQS (138 aa)). Residues cysteine 4394, cysteine 4397, histidine 4403, cysteine 4410, cysteine 4436, cysteine 4439, cysteine 4447, and cysteine 4449 each contribute to the Zn(2+) site. 2 zinc fingers span residues 4394-4410 (CIYC…DGIC) and 4436-4449 (CQVC…SCSC). The NiRAN domain occupies 4463-4718 (FLNRVRGTSV…DCELFVNDSY (256 aa)). 2 residues coordinate Mn(2+): asparagine 4666 and aspartate 4675. In terms of domain architecture, Nsp12 Interface spans 4719–4817 (RQFDLVQYDF…MNLDVDTHRY (99 aa)). The Zn(2+) site is built by histidine 4748, cysteine 4754, cysteine 4759, cysteine 4763, and cysteine 4940. Residues 4818-5385 (RLSLKDLLLY…NMYLKSAVMQ (568 aa)) form the Nsp12 RNA-dependent RNA polymerase domain. The tract at residues 4820 to 5034 (SLKDLLLYAA…HQKCLKSIAA (215 aa)) is rdRp Fingers N-ter. The interval 5035–5073 (TRGVPVVIGTTKFYGGWDDMLRHLIKDVDNPVLMGWDYP) is rdRp Palm N-ter. A RdRp catalytic domain is found at 5065-5227 (PVLMGWDYPK…CYNSDYASKG (163 aa)). A rdRp Fingers C-ter region spans residues 5074 to 5132 (KCDRAMPNILRIVSSLVLARKHEFCCSHGDRFYRLANECAQVLSEIVMCGGCYYVKPGG). The Zn(2+) site is built by histidine 5095, cysteine 5098, and cysteine 5099. A rdRp Palm C-ter region spans residues 5133–5268 (TSSGDATTAF…TNGPHEFCSQ (136 aa)). Residues serine 5212, aspartate 5213, and aspartate 5214 contribute to the active site. The rdRp Thumb stretch occupies residues 5269–5385 (HTMLVKIDGD…NMYLKSAVMQ (117 aa)). Positions 5386-5498 (SVGACVVCSS…DDFNKIASCK (113 aa)) constitute a CV ZBD domain. Cysteine 5390, cysteine 5393, cysteine 5401, cysteine 5404, cysteine 5411, cysteine 5414, histidine 5418, histidine 5424, cysteine 5435, cysteine 5440, cysteine 5457, and histidine 5460 together coordinate Zn(2+). Residues 5641-5822 (SVPLVFQNNV…MCCLGPDIFL (182 aa)) form the (+)RNA virus helicase ATP-binding domain. 5666 to 5673 (GPPGTGKS) contributes to the ATP binding site. The region spanning 5823 to 5992 (GNCYRCPKEI…TLPRLHCTTN (170 aa)) is the (+)RNA virus helicase C-terminal domain. The 216-residue stretch at 6059–6274 (LFITKDEAIK…RCLAIYDCFC (216 aa)) folds into the ExoN domain. Catalysis depends on residues aspartate 6077, glutamate 6079, and glutamate 6178. Zn(2+)-binding residues include cysteine 6194, cysteine 6197, cysteine 6213, histidine 6216, histidine 6244, cysteine 6248, and histidine 6251. Active-site residues include histidine 6255 and aspartate 6260. Cysteine 6266 is a binding site for Zn(2+). The region spanning 6283–6509 (YPIISNEVSI…NLWNTFTTLQ (227 aa)) is the N7-MTase domain. 6318-6324 (DIGNPKG) provides a ligand contact to S-adenosyl-L-methionine. Residues 6396-6410 (CNGGSLYVNKHAFHT) are gpppA-binding. Residues cysteine 6434, cysteine 6455, cysteine 6466, and histidine 6469 each contribute to the Zn(2+) site. A Nsp15 N-terminal oligomerization domain is found at 6510–6570 (SLENVIYNLV…NIAVELFTKR (61 aa)). Positions 6571-6691 (SIRHHPELKI…FAMRKDGDDV (121 aa)) constitute an AV-Nsp11N/CoV-Nsp15M domain. The NendoU domain maps to 6741–6880 (EPRSDLERDF…NDNKIMTFYP (140 aa)). Residues histidine 6771, histidine 6786, lysine 6826, lysine 6929, aspartate 7013, lysine 7053, and glutamate 7086 contribute to the active site. The region spanning 6885–7179 (TNDWKPGYSM…KEIFVGDSLV (295 aa)) is the Nidovirus-type SAM-dependent 2'-O-MTase domain.

Belongs to the coronaviruses polyprotein 1ab family. As to quaternary structure, interacts with host PHB and PHB2. In terms of assembly, interacts with papain-like protease nsp3 and non-structural protein 6. Monomer. Homodimer. Only the homodimer shows catalytic activity. As to quaternary structure, interacts with nsp8 and nsp12 to form the replication-transcription complex (RTC): nsp12, nsp7, two subunits of nsp8, and up to two subunits of nsp13. In terms of assembly, interacts with nsp7, nsp13 and nsp12 to form the replication-transcription complex (RTC): nsp12, nsp7, two subunits of nsp8, and up to two subunits of nsp13. Interacts with nsp12. As to quaternary structure, interacts with proofreading exoribonuclease nsp14 and 2'-O-methyltransferase nsp16; these interactions enhance nsp14 and nsp16 enzymatic activities. In terms of assembly, interacts with nsp7 and nsp8 to form the replication-transcription complex (RTC): nsp12, nsp7, two subunits of nsp8, and up to two subunits of nsp13. Interacts with nsp9. Interacts with nsp8 to form the replication-transcription complex (RTC): nsp12, nsp7, two subunits of nsp8, and up to two subunits of nsp13. It depends on Mn(2+) as a cofactor. Mg(2+) is required as a cofactor. Post-translationally, specific enzymatic cleavages in vivo by its own proteases yield mature proteins. 3CL-PRO and PL-PRO proteinases are autocatalytically processed.

The protein localises to the host membrane. Its subcellular location is the host cytoplasm. The protein resides in the host perinuclear region. It localises to the host endoplasmic reticulum-Golgi intermediate compartment. The catalysed reaction is RNA(n) + a ribonucleoside 5'-triphosphate = RNA(n+1) + diphosphate. It catalyses the reaction ATP + H2O = ADP + phosphate + H(+). The enzyme catalyses Thiol-dependent hydrolysis of ester, thioester, amide, peptide and isopeptide bonds formed by the C-terminal Gly of ubiquitin (a 76-residue protein attached to proteins as an intracellular targeting signal).. It carries out the reaction a 5'-end (N(7)-methyl 5'-triphosphoguanosine)-ribonucleoside in mRNA + S-adenosyl-L-methionine = a 5'-end (N(7)-methyl 5'-triphosphoguanosine)-(2'-O-methyl-ribonucleoside) in mRNA + S-adenosyl-L-homocysteine + H(+). The catalysed reaction is uridylyl-uridylyl-ribonucleotide-RNA = a 3'-end uridylyl-2',3'-cyclophospho-uridine-RNA + a 5'-end dephospho-ribonucleoside-RNA. It catalyses the reaction a 5'-end diphospho-ribonucleoside in mRNA + GTP + H(+) = a 5'-end (5'-triphosphoguanosine)-ribonucleoside in mRNA + diphosphate. The enzyme catalyses a 5'-end (5'-triphosphoguanosine)-ribonucleoside in mRNA + S-adenosyl-L-methionine = a 5'-end (N(7)-methyl 5'-triphosphoguanosine)-ribonucleoside in mRNA + S-adenosyl-L-homocysteine. In terms of biological role, the replicase polyprotein of coronaviruses is a multifunctional protein: it contains the activities necessary for the transcription of negative stranded RNA, leader RNA, subgenomic mRNAs and progeny virion RNA as well as proteinases responsible for the cleavage of the polyprotein into functional products. Functionally, inhibits host translation by interacting with the 40S ribosomal subunit. The nsp1-40S ribosome complex further induces an endonucleolytic cleavage near the 5'UTR of host mRNAs, targeting them for degradation. Viral mRNAs are not susceptible to nsp1-mediated endonucleolytic RNA cleavage thanks to the presence of a 5'-end leader sequence and are therefore protected from degradation. By suppressing host gene expression, nsp1 facilitates efficient viral gene expression in infected cells and evasion from host immune response. May play a role in the modulation of host cell survival signaling pathway by interacting with host PHB and PHB2. Indeed, these two proteins play a role in maintaining the functional integrity of the mitochondria and protecting cells from various stresses. Its function is as follows. Responsible for the cleavages located at the N-terminus of the replicase polyprotein. In addition, PL-PRO possesses a deubiquitinating/deISGylating activity and processes both 'Lys-48'- and 'Lys-63'-linked polyubiquitin chains from cellular substrates. Participates together with nsp4 in the assembly of virally-induced cytoplasmic double-membrane vesicles necessary for viral replication. Antagonizes innate immune induction of type I interferon by blocking the phosphorylation, dimerization and subsequent nuclear translocation of host IRF3. Also prevents host NF-kappa-B signaling. In terms of biological role, participates in the assembly of virally-induced cytoplasmic double-membrane vesicles necessary for viral replication. Functionally, cleaves the C-terminus of replicase polyprotein at 11 sites. Recognizes substrates containing the core sequence [ILMVF]-Q-|-[SGACN]. Also able to bind an ADP-ribose-1''-phosphate (ADRP). Plays a role in the initial induction of autophagosomes from host endoplasmic reticulum. Later, limits the expansion of these phagosomes that are no longer able to deliver viral components to lysosomes. Its function is as follows. Forms a hexadecamer with nsp8 (8 subunits of each) that may participate in viral replication by acting as a primase. Alternatively, may synthesize substantially longer products than oligonucleotide primers. In terms of biological role, forms a hexadecamer with nsp7 (8 subunits of each) that may participate in viral replication by acting as a primase. Alternatively, may synthesize substantially longer products than oligonucleotide primers. Functionally, forms a primer, NSP9-pU, which is utilized by the polymerase for the initiation of RNA chains. Interacts with ribosome signal recognition particle RNA (SRP). Together with NSP8, suppress protein integration into the cell membrane, thereby disrupting host immune defenses. Plays a pivotal role in viral transcription by stimulating both nsp14 3'-5' exoribonuclease and nsp16 2'-O-methyltransferase activities. Therefore plays an essential role in viral mRNAs cap methylation. Its function is as follows. RNA-directed RNA polymerase that catalyzes the transcription of viral genomic and subgenomic RNAs. Acts in complex with nsp7 and nsp8 to transcribe both the minus and positive strands of genomic RNA. The kinase-like NiRAN domain of NSP12 attaches one or more nucleotides to the amino terminus of NSP9, forming a covalent RNA-protein intermediate that serves as transcription/replication primer. Subgenomic RNAs (sgRNAs) are formed by discontinuous transcription: The polymerase has the ability to pause at transcription-regulating sequences (TRS) and jump to the leader TRS, resulting in a major deletion. This creates a series of subgenomic RNAs that are replicated, transcribed and translated. In addition, Nsp12 is a subunit of the viral RNA capping enzyme that catalyzes the RNA guanylyltransferase reaction for genomic and sub-genomic RNAs. Subsequently, the NiRAN domain transfers RNA to GDP, and forms the core cap structure GpppA-RNA. In terms of biological role, multi-functional protein with a zinc-binding domain in N-terminus displaying RNA and DNA duplex-unwinding activities with 5' to 3' polarity. Activity of helicase is dependent on magnesium. Functionally, plays a role in viral RNA synthesis through two distinct activities. The N7-guanine methyltransferase activity plays a role in the formation of the cap structure GpppA-RNA. The proofreading exoribonuclease reduces the sensitivity of the virus to RNA mutagens during replication. This activity acts on both ssRNA and dsRNA in a 3'-5' direction. Plays a role in viral transcription/replication and prevents the simultaneous activation of host cell dsRNA sensors, such as MDA5/IFIH1, OAS, and PKR. Acts by degrading the 5'-polyuridines generated during replication of the poly(A) region of viral genomic and subgenomic RNAs. Catalyzes a two-step reaction in which a 2'3'-cyclic phosphate (2'3'-cP) is first generated by 2'-O transesterification, which is then hydrolyzed to a 3'-phosphate (3'-P). If not degraded, poly(U) RNA would hybridize with poly(A) RNA tails and activate host dsRNA sensors. Its function is as follows. Methyltransferase that mediates mRNA cap 2'-O-ribose methylation to the 5'-cap structure of viral mRNAs. N7-methyl guanosine cap is a prerequisite for binding of nsp16. Therefore plays an essential role in viral mRNAs cap methylation which is essential to evade immune system. The polypeptide is Replicase polyprotein 1ab (rep) (Human coronavirus HKU1 (isolate N1) (HCoV-HKU1)).